Consider the following 81-residue polypeptide: Small ribosomal subunit protein uS17 (81 aa).

Belongs to the universal ribosomal protein uS17 family. As to quaternary structure, part of the 30S ribosomal subunit.

Functionally, one of the primary rRNA binding proteins, it binds specifically to the 5'-end of 16S ribosomal RNA. This is Small ribosomal subunit protein uS17 from Hyphomonas neptunium (strain ATCC 15444).